Consider the following 346-residue polypeptide: Annexin A1 (346 aa).

Serine 5 is subject to Phosphoserine; by TRPM7. Glutamine 19 is covalently cross-linked (Isoglutamyl lysine isopeptide (Gln-Lys) (interchain with K-?)). Position 21 is a phosphotyrosine; by EGFR (tyrosine 21). Serine 27 is modified (phosphoserine; by PKC). A phosphoserine mark is found at serine 34 and serine 37. 4 Annexin repeats span residues 42 to 113 (FDAS…ALLK), 114 to 185 (TPAQ…SLAK), 197 to 269 (DLAD…AIVK), and 273 to 344 (STPA…ALCG). The residue at position 58 (lysine 58) is an N6-acetyllysine. Residues glycine 59, valine 60, glutamate 62, lysine 97, leucine 100, glutamate 105, methionine 127, glycine 129, glycine 131, threonine 132, and glutamate 134 each coordinate Ca(2+). Threonine 136 is subject to Phosphothreonine. Positions 171, 210, and 213 each coordinate Ca(2+). Residue lysine 214 forms a Glycyl lysine isopeptide (Lys-Gly) (interchain with G-Cter in SUMO1); alternate linkage. Residue lysine 214 forms a Glycyl lysine isopeptide (Lys-Gly) (interchain with G-Cter in SUMO2); alternate linkage. Glycine 215 serves as a coordination point for Ca(2+). Lysine 239 carries the post-translational modification N6-acetyllysine. Residues aspartate 253, glutamate 255, and leucine 256 each contribute to the Ca(2+) site. Residue lysine 257 forms a Glycyl lysine isopeptide (Lys-Gly) (interchain with G-Cter in SUMO1) linkage. Residues glutamate 261, methionine 286, glycine 288, and glycine 290 each contribute to the Ca(2+) site. Lysine 312 carries the post-translational modification N6-acetyllysine. The cysteines at positions 324 and 343 are disulfide-linked. Leucine 328, glutamate 330, and threonine 331 together coordinate Ca(2+). A Glycyl lysine isopeptide (Lys-Gly) (interchain with G-Cter in SUMO1) cross-link involves residue lysine 332. Glutamate 336 is a binding site for Ca(2+).

The protein belongs to the annexin family. Homodimer; non-covalently linked. Homodimer; linked by transglutamylation. Homodimers linked by transglutamylation are observed in placenta, but not in other tissues. Interacts with S100A11. Heterotetramer, formed by two molecules each of S100A11 and ANXA1. Interacts with DYSF. Interacts with EGFR. Phosphorylated by protein kinase C, EGFR and TRPM7. Phosphorylated in response to EGF treatment. Post-translationally, sumoylated. In terms of processing, proteolytically cleaved by cathepsin CTSG to release the active N-terminal peptide Ac2-26.

It is found in the nucleus. It localises to the cytoplasm. The protein localises to the cell projection. The protein resides in the cilium. Its subcellular location is the basolateral cell membrane. It is found in the lateral cell membrane. It localises to the cell membrane. The protein localises to the apical cell membrane. The protein resides in the membrane. Its subcellular location is the endosome membrane. It is found in the secreted. It localises to the extracellular space. The protein localises to the early endosome. The protein resides in the cytoplasmic vesicle membrane. Its subcellular location is the extracellular exosome. It is found in the cytoplasmic vesicle. It localises to the secretory vesicle lumen. The protein localises to the phagocytic cup. Functionally, plays important roles in the innate immune response as effector of glucocorticoid-mediated responses and regulator of the inflammatory process. Has anti-inflammatory activity. Plays a role in glucocorticoid-mediated down-regulation of the early phase of the inflammatory response. Contributes to the adaptive immune response by enhancing signaling cascades that are triggered by T-cell activation, regulates differentiation and proliferation of activated T-cells. Promotes the differentiation of T-cells into Th1 cells and negatively regulates differentiation into Th2 cells. Has no effect on unstimulated T-cells. Negatively regulates hormone exocytosis via activation of the formyl peptide receptors and reorganization of the actin cytoskeleton. Has high affinity for Ca(2+) and can bind up to eight Ca(2+) ions. Displays Ca(2+)-dependent binding to phospholipid membranes. Plays a role in the formation of phagocytic cups and phagosomes. Plays a role in phagocytosis by mediating the Ca(2+)-dependent interaction between phagosomes and the actin cytoskeleton. In terms of biological role, functions at least in part by activating the formyl peptide receptors and downstream signaling cascades. Promotes chemotaxis of granulocytes and monocytes via activation of the formyl peptide receptors. Promotes rearrangement of the actin cytoskeleton, cell polarization and cell migration. Promotes resolution of inflammation and wound healing. Acts via neutrophil N-formyl peptide receptors to enhance the release of CXCL2. The protein is Annexin A1 (ANXA1) of Cavia cutleri (Guinea pig).